A 266-amino-acid chain; its full sequence is MADAQFDSALDLLRRLNPRDTKQNLQAITSIVPDLTEDLLSSVDQPLEIRRCPKTKRDYLLCDYNRDGDSYRSPWSNEFDPPLDDGTVPSERVRRLEVAANEAFDVYRELYYEGGVGSVYFWDLDDGFAGVILLKKGVSPGGKHSGEWDSIHVFEATDRGRMAHYKLTSTVILHLSNENEALGEMDLSGNMTRQIEVDMNVDSDASHVANVGKLVEDMELKMRNLLQEVYFGKAKDVVGELRSIGPLSETNRDRATHQEMIRGLQR.

Belongs to the F-actin-capping protein beta subunit family. In terms of assembly, component of the F-actin capping complex, composed of a heterodimer of an alpha and a beta subunit.

It localises to the cytoplasm. The protein resides in the cytoskeleton. It is found in the actin patch. In terms of biological role, F-actin-capping proteins bind in a Ca(2+)-independent manner to the fast growing ends of actin filaments (barbed end) thereby blocking the exchange of subunits at these ends. Unlike other capping proteins (such as gelsolin and severin), these proteins do not sever actin filaments. In Emericella nidulans (strain FGSC A4 / ATCC 38163 / CBS 112.46 / NRRL 194 / M139) (Aspergillus nidulans), this protein is F-actin-capping protein subunit beta (cap2).